We begin with the raw amino-acid sequence, 117 residues long: Putative membrane protein insertion efficiency factor (117 aa).

The protein belongs to the UPF0161 family.

The protein localises to the cell inner membrane. Could be involved in insertion of integral membrane proteins into the membrane. This is Putative membrane protein insertion efficiency factor from Helicobacter pylori (strain ATCC 700392 / 26695) (Campylobacter pylori).